The following is a 24-amino-acid chain: Ascaphin-5 (24 aa).

In terms of tissue distribution, expressed by the skin glands.

It is found in the secreted. Antimicrobial peptide. Synthetic peptide shows higher potency against Gram-negative bacteria than against Gram-positive bacteria. Has a very week hemolytic activity. In Ascaphus truei (Coastal tailed frog), this protein is Ascaphin-5.